The primary structure comprises 207 residues: Casparian strip membrane protein 3 (207 aa).

Residues 1 to 45 (MDSTKSTEETAINIPRESSSTKHKIAVAAVKAVATPHKRGGMKRG) are Cytoplasmic-facing. Residues 46-66 (VAIFDFILRICALAAALAATA) traverse the membrane as a helical segment. Over 67-95 (TMGTTDQTLPFFTQFFQFQASYDDLPTFT) the chain is Extracellular. Residues 96–116 (FFVIANAIASGYLVLSLPFSI) form a helical membrane-spanning segment. Residues 117-128 (VAIVRPHVTGVK) lie on the Cytoplasmic side of the membrane. A helical transmembrane segment spans residues 129–149 (LLLLILDTVLVAFTTAAAASA). At 150–181 (AAIVYLAHNGNSNTNWFAICQQFNDFCQRTSG) the chain is on the extracellular side. The chain crosses the membrane as a helical span at residues 182–202 (AVVASFIAAAIFIFLVVLSAV). The Cytoplasmic portion of the chain corresponds to 203–207 (ALRRH).

This sequence belongs to the Casparian strip membrane proteins (CASP) family. In terms of assembly, homodimer and heterodimers.

Its subcellular location is the cell membrane. In terms of biological role, regulates membrane-cell wall junctions and localized cell wall deposition. Required for establishment of the Casparian strip membrane domain (CSD) and the subsequent formation of Casparian strips, a cell wall modification of the root endodermis that determines an apoplastic barrier between the intraorganismal apoplasm and the extraorganismal apoplasm and prevents lateral diffusion. This is Casparian strip membrane protein 3 from Erythranthe guttata (Yellow monkey flower).